Reading from the N-terminus, the 538-residue chain is Glutamyl-tRNA(Gln) amidotransferase subunit B, mitochondrial (538 aa).

It belongs to the GatB/GatE family. GatB subfamily. Subunit of the heterotrimeric GatCAB amidotransferase (AdT) complex, composed of A, B and C subunits.

The protein resides in the mitochondrion. It carries out the reaction L-glutamyl-tRNA(Gln) + L-glutamine + ATP + H2O = L-glutaminyl-tRNA(Gln) + L-glutamate + ADP + phosphate + H(+). Functionally, allows the formation of correctly charged Gln-tRNA(Gln) through the transamidation of misacylated Glu-tRNA(Gln) in the mitochondria. The reaction takes place in the presence of glutamine and ATP through an activated gamma-phospho-Glu-tRNA(Gln). This Dictyostelium discoideum (Social amoeba) protein is Glutamyl-tRNA(Gln) amidotransferase subunit B, mitochondrial.